A 245-amino-acid polypeptide reads, in one-letter code: Orotidine 5'-phosphate decarboxylase (245 aa).

Substrate contacts are provided by residues D22, K44, 71-80 (DLKFHDIPNT), T131, R192, Q201, G221, and R222. Catalysis depends on K73, which acts as the Proton donor.

The protein belongs to the OMP decarboxylase family. Type 1 subfamily. As to quaternary structure, homodimer.

The enzyme catalyses orotidine 5'-phosphate + H(+) = UMP + CO2. It participates in pyrimidine metabolism; UMP biosynthesis via de novo pathway; UMP from orotate: step 2/2. Functionally, catalyzes the decarboxylation of orotidine 5'-monophosphate (OMP) to uridine 5'-monophosphate (UMP). In Escherichia coli O6:K15:H31 (strain 536 / UPEC), this protein is Orotidine 5'-phosphate decarboxylase.